The sequence spans 304 residues: Rhomboid-like protein 19 (304 aa).

The next 6 helical transmembrane spans lie at 23–43, 58–78, 93–113, 120–140, 158–175, and 179–198; these read LVVGHLVVQFIPATVPYLALI, GYFELSVYGVVFSTVSLLFMG, FIFVVNFLTYLCVFVTAIALY, VYLYMPFAGFHGVLAGLLVGI, WLPSIMLILSIASSFFTL, and AYLPTLIFGTYMGWLYLRYL. Residues 247–304 are disordered; sequence SEDHDYSTSGAPLPGSDSAEASRRRERGARALEERLGTERLVPARNKDELQSDGLDNV. Residues 266–284 show a composition bias toward basic and acidic residues; it reads EASRRRERGARALEERLGT.

The protein belongs to the peptidase S54 family.

It localises to the membrane. Probable rhomboid-type serine protease that catalyzes intramembrane proteolysis. In Arabidopsis thaliana (Mouse-ear cress), this protein is Rhomboid-like protein 19.